Here is a 333-residue protein sequence, read N- to C-terminus: Phosphate acyltransferase (333 aa).

It belongs to the PlsX family. In terms of assembly, homodimer. Probably interacts with PlsY.

The protein resides in the cytoplasm. The catalysed reaction is a fatty acyl-[ACP] + phosphate = an acyl phosphate + holo-[ACP]. The protein operates within lipid metabolism; phospholipid metabolism. Functionally, catalyzes the reversible formation of acyl-phosphate (acyl-PO(4)) from acyl-[acyl-carrier-protein] (acyl-ACP). This enzyme utilizes acyl-ACP as fatty acyl donor, but not acyl-CoA. The sequence is that of Phosphate acyltransferase from Lactobacillus gasseri (strain ATCC 33323 / DSM 20243 / BCRC 14619 / CIP 102991 / JCM 1131 / KCTC 3163 / NCIMB 11718 / NCTC 13722 / AM63).